Here is a 386-residue protein sequence, read N- to C-terminus: Succinate--CoA ligase [ADP-forming] subunit beta (386 aa).

The 236-residue stretch at 9 to 244 folds into the ATP-grasp domain; sequence KAVLRSYGVS…LDEEDSKEIE (236 aa). ATP contacts are provided by residues lysine 46, 53–55, glutamate 99, cysteine 102, and glutamate 107; that span reads GRG. Residues asparagine 199 and aspartate 213 each contribute to the Mg(2+) site. Substrate contacts are provided by residues asparagine 264 and 321–323; that span reads GIM.

This sequence belongs to the succinate/malate CoA ligase beta subunit family. As to quaternary structure, heterotetramer of two alpha and two beta subunits. Requires Mg(2+) as cofactor.

The catalysed reaction is succinate + ATP + CoA = succinyl-CoA + ADP + phosphate. The enzyme catalyses GTP + succinate + CoA = succinyl-CoA + GDP + phosphate. The protein operates within carbohydrate metabolism; tricarboxylic acid cycle; succinate from succinyl-CoA (ligase route): step 1/1. Its function is as follows. Succinyl-CoA synthetase functions in the citric acid cycle (TCA), coupling the hydrolysis of succinyl-CoA to the synthesis of either ATP or GTP and thus represents the only step of substrate-level phosphorylation in the TCA. The beta subunit provides nucleotide specificity of the enzyme and binds the substrate succinate, while the binding sites for coenzyme A and phosphate are found in the alpha subunit. This Bacillus cereus (strain G9842) protein is Succinate--CoA ligase [ADP-forming] subunit beta.